The primary structure comprises 158 residues: NAD(P)H-quinone oxidoreductase subunit J, chloroplastic (158 aa).

Belongs to the complex I 30 kDa subunit family. In terms of assembly, NDH is composed of at least 16 different subunits, 5 of which are encoded in the nucleus.

It is found in the plastid. The protein resides in the chloroplast thylakoid membrane. It catalyses the reaction a plastoquinone + NADH + (n+1) H(+)(in) = a plastoquinol + NAD(+) + n H(+)(out). It carries out the reaction a plastoquinone + NADPH + (n+1) H(+)(in) = a plastoquinol + NADP(+) + n H(+)(out). In terms of biological role, NDH shuttles electrons from NAD(P)H:plastoquinone, via FMN and iron-sulfur (Fe-S) centers, to quinones in the photosynthetic chain and possibly in a chloroplast respiratory chain. The immediate electron acceptor for the enzyme in this species is believed to be plastoquinone. Couples the redox reaction to proton translocation, and thus conserves the redox energy in a proton gradient. The chain is NAD(P)H-quinone oxidoreductase subunit J, chloroplastic from Liriodendron tulipifera (Tuliptree).